Here is a 293-residue protein sequence, read N- to C-terminus: ELMO domain-containing protein 2 (293 aa).

An ELMO domain is found at 126 to 282 (QHEKLLIKLW…KFHEKIKGLL (157 aa)).

Its function is as follows. Acts as a GTPase-activating protein (GAP) toward guanine nucleotide exchange factors like ARL2, ARL3, ARF1 and ARF6, but not for GTPases outside the Arf family. The polypeptide is ELMO domain-containing protein 2 (ELMOD2) (Bos taurus (Bovine)).